We begin with the raw amino-acid sequence, 317 residues long: Protein IMPACT-B (317 aa).

Positions Glu17 to Lys118 constitute an RWD domain. The disordered stretch occupies residues Asp296–Lys317. Over residues Gly306 to Lys317 the composition is skewed to basic residues.

It belongs to the IMPACT family. As to quaternary structure, interacts with GCN1; prevents the interaction of GCN1 with EIF2AK4/GCN2 and inhibits EIF2AK4/GCN2 kinase activity. Interaction with RPL39; this interaction occurs in a GCN1-independent manner. Associates with ribosomes; this interaction occurs in a GCN1-independent manner. Associates with actin; this interaction occurs in a GCN1-independent manner.

It localises to the cytoplasm. Functionally, translational regulator that ensures constant high levels of translation upon a variety of stress conditions, such as amino acid starvation, UV-C irradiation, proteasome inhibitor treatment and glucose deprivation. Plays a role as a negative regulator of the EIF2AK4/GCN2 kinase activity; impairs GCN1-mediated EIF2AK4/GCN2 activation, and hence EIF2AK4/GCN2-mediated eIF-2-alpha phosphorylation and subsequent down-regulation of protein synthesis. Plays a role in differentiation of neuronal cells by stimulating neurite outgrowth. This Xenopus tropicalis (Western clawed frog) protein is Protein IMPACT-B (impact-B).